A 209-amino-acid polypeptide reads, in one-letter code: Max dimerization protein 4 (209 aa).

The interaction with SIN3A and SIN3B stretch occupies residues 6–23; sequence LLLLLEAAEYLERRDREA. The bHLH domain occupies 53-105; it reads NNRSSHNELEKHRRAKLRLYLEQLKQLGPLGPDSTRHTTLSLLKRAKMHIKKL. Residues 137–209 form a disordered region; the sequence is SVERVRTDST…CRRPGCPGLS (73 aa). Residues 153 to 163 are compositionally biased toward acidic residues; that stretch reads DDSEQEVDIEG. The span at 185–195 shows a compositional bias: polar residues; it reads SLQSSGCSDSS.

Efficient DNA binding requires dimerization with another bHLH protein. Binds DNA as a heterodimer with MAX. Interacts with SIN3A AND SIN3B. Interacts with RNF17.

Its subcellular location is the nucleus. Functionally, transcriptional repressor. Binds with MAX to form a sequence-specific DNA-binding protein complex which recognizes the core sequence 5'-CAC[GA]TG-3'. Antagonizes MYC transcriptional activity by competing for MAX and suppresses MYC dependent cell transformation. The protein is Max dimerization protein 4 (Mxd4) of Mus musculus (Mouse).